We begin with the raw amino-acid sequence, 256 residues long: Gene 18 protein (256 aa).

Belongs to the herpesviridae UL79 family.

This chain is Gene 18 protein (18), found in Saimiriine herpesvirus 2 (strain 11) (SaHV-2).